Here is a 381-residue protein sequence, read N- to C-terminus: Transaldolase 2 (381 aa).

Residue Lys141 is the Schiff-base intermediate with substrate of the active site.

This sequence belongs to the transaldolase family. Type 2 subfamily.

It localises to the cytoplasm. It carries out the reaction D-sedoheptulose 7-phosphate + D-glyceraldehyde 3-phosphate = D-erythrose 4-phosphate + beta-D-fructose 6-phosphate. Its pathway is carbohydrate degradation; pentose phosphate pathway; D-glyceraldehyde 3-phosphate and beta-D-fructose 6-phosphate from D-ribose 5-phosphate and D-xylulose 5-phosphate (non-oxidative stage): step 2/3. In terms of biological role, transaldolase is important for the balance of metabolites in the pentose-phosphate pathway. In Nostoc sp. (strain PCC 7120 / SAG 25.82 / UTEX 2576), this protein is Transaldolase 2 (tal2).